Consider the following 159-residue polypeptide: Probable cyclic pyranopterin monophosphate synthase (159 aa).

Substrate-binding positions include 74 to 76 (MCH) and 110 to 111 (ME). Asp125 is a catalytic residue.

This sequence belongs to the MoaC family. Homohexamer; trimer of dimers.

It carries out the reaction (8S)-3',8-cyclo-7,8-dihydroguanosine 5'-triphosphate = cyclic pyranopterin phosphate + diphosphate. Its pathway is cofactor biosynthesis; molybdopterin biosynthesis. Functionally, catalyzes the conversion of (8S)-3',8-cyclo-7,8-dihydroguanosine 5'-triphosphate to cyclic pyranopterin monophosphate (cPMP). The protein is Probable cyclic pyranopterin monophosphate synthase of Methanococcoides burtonii (strain DSM 6242 / NBRC 107633 / OCM 468 / ACE-M).